Here is a 297-residue protein sequence, read N- to C-terminus: Pyridoxal 5'-phosphate synthase subunit SNZ1 (297 aa).

Asp23 is a binding site for D-ribose 5-phosphate. Lys80 acts as the Schiff-base intermediate with D-ribose 5-phosphate in catalysis. Residue Gly152 coordinates D-ribose 5-phosphate. Arg164 contributes to the D-glyceraldehyde 3-phosphate binding site. D-ribose 5-phosphate-binding positions include Gly214 and 235-236 (GS).

It belongs to the PdxS/SNZ family. Homohexamer. Interacts with AIM18.

It carries out the reaction aldehydo-D-ribose 5-phosphate + D-glyceraldehyde 3-phosphate + L-glutamine = pyridoxal 5'-phosphate + L-glutamate + phosphate + 3 H2O + H(+). Its pathway is cofactor biosynthesis; pyridoxal 5'-phosphate biosynthesis. Functionally, catalyzes the formation of pyridoxal 5'-phosphate from ribose 5-phosphate (RBP), glyceraldehyde 3-phosphate (G3P) and ammonia. The ammonia is provided by a SNO isoform. Can also use ribulose 5-phosphate and dihydroxyacetone phosphate as substrates, resulting from enzyme-catalyzed isomerization of RBP and G3P, respectively. This is Pyridoxal 5'-phosphate synthase subunit SNZ1 (SNZ1) from Saccharomyces cerevisiae (strain ATCC 204508 / S288c) (Baker's yeast).